A 45-amino-acid polypeptide reads, in one-letter code: Cytochrome b559 subunit beta (45 aa).

At Thr-2 the chain carries N-acetylthreonine. The Cytoplasmic portion of the chain corresponds to 2–17; that stretch reads TSNTPNQEPVSYPIFT. The helical transmembrane segment at 18-42 threads the bilayer; that stretch reads VRWVAVHTLAVPTIFFLGAIAAMQF. Heme is bound at residue His-24. Over 43 to 45 the chain is Lumenal; sequence IQR.

As to quaternary structure, heterodimer of an alpha subunit and a beta subunit. PSII is composed of 1 copy each of membrane proteins PsbA, PsbB, PsbC, PsbD, PsbE, PsbF, PsbH, PsbI, PsbJ, PsbK, PsbL, PsbM, PsbT, PsbX, PsbY, PsbZ, Psb30/Ycf12, peripheral proteins PsbO, CyanoQ (PsbQ), PsbU, PsbV and a large number of cofactors. It forms dimeric complexes. Part of a photosystem II (PSII) assembly intermediate complex PSII-I; crystallized from a strain deleted of psbJ, it forms monomeric PSII before addition of the oxygen evolving complex. PSII-I includes 3 assembly factors not found in mature PSII (Psb27, Psb28 and Psb34). The cofactor is heme b.

Its subcellular location is the cellular thylakoid membrane. In terms of biological role, this b-type cytochrome is tightly associated with the reaction center of photosystem II (PSII). PSII is a light-driven water:plastoquinone oxidoreductase that uses light energy to abstract electrons from H(2)O, generating O(2) and a proton gradient subsequently used for ATP formation. It consists of a core antenna complex that captures photons, and an electron transfer chain that converts photonic excitation into a charge separation. The chain is Cytochrome b559 subunit beta from Thermosynechococcus vestitus (strain NIES-2133 / IAM M-273 / BP-1).